Here is a 526-residue protein sequence, read N- to C-terminus: Putative D-lactate dehydrogenase C713.03, mitochondrial (526 aa).

Positions 93 to 272 constitute an FAD-binding PCMH-type domain; sequence YRGKTQLALK…TKLSVICPKR (180 aa).

This sequence belongs to the FAD-binding oxidoreductase/transferase type 4 family. Requires FAD as cofactor.

It is found in the mitochondrion matrix. The enzyme catalyses (R)-lactate + 2 Fe(III)-[cytochrome c] = 2 Fe(II)-[cytochrome c] + pyruvate + 2 H(+). The protein is Putative D-lactate dehydrogenase C713.03, mitochondrial of Schizosaccharomyces pombe (strain 972 / ATCC 24843) (Fission yeast).